The sequence spans 152 residues: Non-specific lipid transfer protein GPI-anchored 8 (152 aa).

A signal peptide spans 1 to 23 (MNITRILGVVTTVVILYSVQVTA). 3 disulfide bridges follow: cysteine 42-cysteine 56, cysteine 57-cysteine 98, and cysteine 70-cysteine 107. A glycan (N-linked (GlcNAc...) asparagine) is linked at asparagine 108. A lipid anchor (GPI-anchor amidated serine) is attached at serine 124. Residues 125–152 (GNSFSTKKNTALAITFFGFSFVFLGMII) constitute a propeptide, removed in mature form.

Belongs to the plant LTP family.

The protein localises to the cell membrane. In terms of biological role, probable lipid transfer protein. The sequence is that of Non-specific lipid transfer protein GPI-anchored 8 from Arabidopsis thaliana (Mouse-ear cress).